A 62-amino-acid polypeptide reads, in one-letter code: Phylloseptin-Az7 (62 aa).

An N-terminal signal peptide occupies residues 1 to 19 (LKKSLFLVLFLGLVSLSIC). The propeptide occupies 20–40 (EEEKRETEEKENEQEDDKSEE). Residue Phe-61 is modified to Phenylalanine amide.

This sequence belongs to the frog skin active peptide (FSAP) family. Phylloseptin subfamily. Expressed by the skin glands.

It localises to the secreted. Its function is as follows. Has antimicrobial activity. The chain is Phylloseptin-Az7 (psn15) from Pithecopus azureus (Orange-legged monkey tree frog).